The primary structure comprises 405 residues: NAC transcription factor NAM-A1 (405 aa).

The span at 1–10 (MGSSDSSSGS) shows a compositional bias: low complexity. A disordered region spans residues 1 to 38 (MGSSDSSSGSAQKAARHQHEPPPPRQRGSAPELPPGFR). One can recognise an NAC domain in the interval 33 to 204 (LPPGFRFHPT…DWVLCRIYKK (172 aa)). A DNA-binding region spans residues 137–210 (LGVKKALVFY…IYKKINKAAA (74 aa)).

As to expression, expressed in flag leaves, green spikes and peduncles.

It localises to the nucleus. Functionally, transcription factor of the NAC family associated with the grain protein content (GPC). Accelerates senescence and increases nutrient remobilization from leaves to developing grains. The tetraploid cultivated wheat (T.durum) contains one additional gene coding for a functional protein (NAM-B2) and one extra pseudogene (NAM-B1). In Triticum turgidum subsp. durum (Durum wheat), this protein is NAC transcription factor NAM-A1 (NAM-A1).